The chain runs to 158 residues: Transcription elongation factor GreA (158 aa).

Belongs to the GreA/GreB family.

Necessary for efficient RNA polymerase transcription elongation past template-encoded arresting sites. The arresting sites in DNA have the property of trapping a certain fraction of elongating RNA polymerases that pass through, resulting in locked ternary complexes. Cleavage of the nascent transcript by cleavage factors such as GreA or GreB allows the resumption of elongation from the new 3'terminus. GreA releases sequences of 2 to 3 nucleotides. This Baumannia cicadellinicola subsp. Homalodisca coagulata protein is Transcription elongation factor GreA.